The primary structure comprises 782 residues: Zinc finger and SCAN domain-containing protein 10 (782 aa).

Positions 1–37 (MLAEPVPDALEQEHPGAVKLEEDEVGEEDPRLAESRP) are disordered. Residues 1–71 (MLAEPVPDAL…GRLRELCNHW (71 aa)) form the SCAN box domain. 2 stretches are compositionally biased toward basic and acidic residues: residues 11 to 20 (EQEHPGAVKL) and 28 to 37 (EDPRLAESRP). A phosphoserine mark is found at Ser-160 and Ser-206. Disordered stretches follow at residues 197-233 (LAPS…ENSR) and 290-321 (SQTE…TPAD). 14 consecutive C2H2-type zinc fingers follow at residues 292-315 (TEKP…STGW), 321-343 (DGSE…EMQF), 349-371 (GVNF…NLQP), 377-399 (SFRC…HMRT), 421-443 (LTKH…NQGF), 467-489 (EGKT…TFKR), 495-517 (RHLR…SLSS), 523-545 (PYVC…HTRR), 551-573 (RPFS…SHQQ), 579-601 (KPHA…RHLL), 607-629 (RPYH…RHVR), 635-657 (KPCR…RHQR), 669-691 (ICGH…TGER), and 697-719 (TCGR…TGSK). Positions 302–313 (LTQTVGQETSST) are enriched in polar residues. Gln-485 is subject to N5-methylglutamine. Positions 491–522 (SSLKRHLRNHAKDKDHLSSEDPGSLSSSQESN) are disordered. A compositionally biased stretch (basic and acidic residues) spans 500-509 (HAKDKDHLSS). Residues 510 to 521 (EDPGSLSSSQES) are compositionally biased toward low complexity.

As to quaternary structure, interacts with POU5F1/OCT4 and SOX2. In terms of processing, methylated at Gln-485 by N6AMT1. In terms of tissue distribution, embryonic stem (ES) cell-specific. Not expressed in adult, except in testis.

Its subcellular location is the nucleus. Its function is as follows. Embryonic stem (ES) cell-specific transcription factor required to maintain ES cell pluripotency. Can both activate and /or repress expression of target genes, depending on the context. Specifically binds the 5'-[GA]CGCNNGCG[CT]-3' DNA consensus sequence. Regulates expression of POU5F1/OCT4, ZSCAN4 and ALYREF/THOC4. The chain is Zinc finger and SCAN domain-containing protein 10 (Zscan10) from Mus musculus (Mouse).